We begin with the raw amino-acid sequence, 261 residues long: 5'-nucleotidase SurE (261 aa).

A divalent metal cation is bound by residues aspartate 8, aspartate 9, serine 39, and asparagine 91.

The protein belongs to the SurE nucleotidase family. It depends on a divalent metal cation as a cofactor.

It is found in the cytoplasm. The catalysed reaction is a ribonucleoside 5'-phosphate + H2O = a ribonucleoside + phosphate. Nucleotidase that shows phosphatase activity on nucleoside 5'-monophosphates. This chain is 5'-nucleotidase SurE, found in Polaromonas naphthalenivorans (strain CJ2).